A 459-amino-acid polypeptide reads, in one-letter code: Cysteine--tRNA ligase (459 aa).

Position 31 (C31) interacts with Zn(2+). A 'HIGH' region motif is present at residues P33–N43. 3 residues coordinate Zn(2+): C216, H241, and E245. The 'KMSKS' region motif lies at K274–S278. Residue K277 coordinates ATP.

It belongs to the class-I aminoacyl-tRNA synthetase family. As to quaternary structure, monomer. Zn(2+) serves as cofactor.

The protein localises to the cytoplasm. It carries out the reaction tRNA(Cys) + L-cysteine + ATP = L-cysteinyl-tRNA(Cys) + AMP + diphosphate. The polypeptide is Cysteine--tRNA ligase (Rickettsia conorii (strain ATCC VR-613 / Malish 7)).